Consider the following 333-residue polypeptide: 4-hydroxy-2-oxovalerate aldolase (333 aa).

In terms of domain architecture, Pyruvate carboxyltransferase spans 3 to 253; the sequence is ILINDSTLRD…NTGIDLYHFL (251 aa). 11–12 contributes to the substrate binding site; that stretch reads RD. A Mn(2+)-binding site is contributed by aspartate 12. Histidine 15 (proton acceptor) is an active-site residue. Residues serine 165 and histidine 192 each coordinate substrate. Positions 192 and 194 each coordinate Mn(2+).

It belongs to the 4-hydroxy-2-oxovalerate aldolase family. As to quaternary structure, interacts with MhpF.

The catalysed reaction is (S)-4-hydroxy-2-oxopentanoate = acetaldehyde + pyruvate. The protein operates within aromatic compound metabolism; 3-phenylpropanoate degradation. In terms of biological role, catalyzes the retro-aldol cleavage of 4-hydroxy-2-oxopentanoate to pyruvate and acetaldehyde. Is involved in the meta-cleavage pathway for the degradation of aromatic compounds. The chain is 4-hydroxy-2-oxovalerate aldolase from Serratia proteamaculans (strain 568).